The following is a 470-amino-acid chain: Aldehyde dehydrogenase family 3 comG (470 aa).

Residue 196–201 (GSVKVG) coordinates NAD(+). Residues glutamate 218 and cysteine 252 contribute to the active site.

It belongs to the aldehyde dehydrogenase family.

It localises to the cytoplasm. The enzyme catalyses an aldehyde + NADP(+) + H2O = a carboxylate + NADPH + 2 H(+). It carries out the reaction an aldehyde + NAD(+) + H2O = a carboxylate + NADH + 2 H(+). This is Aldehyde dehydrogenase family 3 comG (comG) from Dictyostelium discoideum (Social amoeba).